The sequence spans 234 residues: UPF0173 metal-dependent hydrolase Msp_0516 (234 aa).

Belongs to the UPF0173 family.

The polypeptide is UPF0173 metal-dependent hydrolase Msp_0516 (Methanosphaera stadtmanae (strain ATCC 43021 / DSM 3091 / JCM 11832 / MCB-3)).